Reading from the N-terminus, the 591-residue chain is CTP synthase 1-B (591 aa).

Positions 300 to 554 (SIALVGKYTK…LASVGRLSQY (255 aa)) constitute a Glutamine amidotransferase type-1 domain. Residues cysteine 399, histidine 526, and glutamate 528 each act as for GATase activity in the active site. Residues 562-572 (SPRDTYSDRSE) show a composition bias toward basic and acidic residues. The interval 562–581 (SPRDTYSDRSENSSPDAEIA) is disordered.

It belongs to the CTP synthase family.

The enzyme catalyses UTP + L-glutamine + ATP + H2O = CTP + L-glutamate + ADP + phosphate + 2 H(+). It functions in the pathway pyrimidine metabolism; CTP biosynthesis via de novo pathway; CTP from UDP: step 2/2. This enzyme is involved in the de novo synthesis of CTP, a precursor of DNA, RNA and phospholipids. Catalyzes the ATP-dependent amination of UTP to CTP with either L-glutamine or ammonia as a source of nitrogen. The protein is CTP synthase 1-B (ctps1-b) of Xenopus laevis (African clawed frog).